We begin with the raw amino-acid sequence, 307 residues long: MEIQFLGTGAGQPSKSRNTQAIALKMLDERNEIWLFDCGEASQHQILNTAIKPRKITKIFITHLHGDHIFGLPGFLSSRSFQSSDEQTDLDLYGPVGIKEFVLAGLRISGSHLGYRINFHEIDSAGKIFEDDSFEVYTDLLDHTIFCLGYRVVEKNRVGELDANALKEAGLPFGPLFGKIKKGEVVDYDGKTFDPKDYIGADKVGKIVTILGDTRKTNTAVRLAWQADLLVHEATYEAAESKMARAHGHSTTKQAADVAKEAGVNRLLLTHISARYVGPLVGQLVREAQDVHANTFVAKDLYEEKIG.

Zn(2+)-binding residues include histidine 63, histidine 65, aspartate 67, histidine 68, histidine 143, aspartate 213, and histidine 271. Aspartate 67 functions as the Proton acceptor in the catalytic mechanism.

This sequence belongs to the RNase Z family. As to quaternary structure, homodimer. Zn(2+) is required as a cofactor.

It catalyses the reaction Endonucleolytic cleavage of RNA, removing extra 3' nucleotides from tRNA precursor, generating 3' termini of tRNAs. A 3'-hydroxy group is left at the tRNA terminus and a 5'-phosphoryl group is left at the trailer molecule.. Its function is as follows. Zinc phosphodiesterase, which displays some tRNA 3'-processing endonuclease activity. Probably involved in tRNA maturation, by removing a 3'-trailer from precursor tRNA. In Lactococcus lactis subsp. cremoris (strain MG1363), this protein is Ribonuclease Z.